A 941-amino-acid chain; its full sequence is Lysine-specific demethylase 7A (941 aa).

A PHD-type zinc finger spans residues 37-88 (PVYCVCRQPYDVNRFMIECDICKDWFHGSCVGVEEHHAVDIDLYHCPNCAVL). The tract at residues 97–114 (RRNWHRHDYTEIDDGSKP) is linker. Residues 230–386 (FSDTKMSELV…MQLRCYEMEK (157 aa)) enclose the JmjC domain. A substrate-binding site is contributed by T279. Fe cation-binding residues include H282 and D284. K299 contributes to the substrate binding site. Residue H354 coordinates Fe cation. Disordered stretches follow at residues 597-633 (QSLY…EHEE), 677-700 (TTEE…KEES), and 819-921 (QDLS…MATA). The residue at position 604 (S604) is a Phosphoserine. 2 stretches are compositionally biased toward basic and acidic residues: residues 618 to 633 (MKIE…EHEE) and 685 to 700 (GDEK…KEES). Over residues 834–876 (SEISQRVQSRNYVDSSGSSLQNGKYMQNSNLTSGACQISNGSL) the composition is skewed to polar residues.

This sequence belongs to the JHDM1 histone demethylase family. JHDM1D subfamily. It depends on Fe(2+) as a cofactor.

Its subcellular location is the nucleus. It catalyses the reaction N(6),N(6)-dimethyl-L-lysyl(9)-[histone H3] + 2 2-oxoglutarate + 2 O2 = L-lysyl(9)-[histone H3] + 2 formaldehyde + 2 succinate + 2 CO2. It carries out the reaction N(6),N(6)-dimethyl-L-lysyl(27)-[histone H3] + 2 2-oxoglutarate + 2 O2 = L-lysyl(27)-[histone H3] + 2 formaldehyde + 2 succinate + 2 CO2. The catalysed reaction is N(6),N(6)-dimethyl-L-lysyl(36)-[histone H3] + 2-oxoglutarate + O2 = N(6)-methyl-L-lysyl(36)-[histone H3] + formaldehyde + succinate + CO2. The enzyme catalyses N(6)-methyl-L-lysyl(20)-[histone H4] + 2-oxoglutarate + O2 = L-lysyl(20)-[histone H4] + formaldehyde + succinate + CO2. Functionally, histone demethylase required for brain development. Specifically demethylates dimethylated 'Lys-9', 'Lys-27' and 'Lys-36' (H3K9me2, H3K27me2, H3K36me2, respectively) of histone H3 and monomethylated histone H4 'Lys-20' residue (H4K20Me1), thereby playing a central role in histone code. Specifically binds trimethylated 'Lys-4' of histone H3 (H3K4me3), affecting histone demethylase specificity: in presence of H3K4me3, it has no demethylase activity toward H3K9me2, while it has high activity toward H3K27me2. Demethylates H3K9me2 in absence of H3K4me3. Has activity toward H4K20Me1 only when nucleosome is used as a substrate and when not histone octamer is used as substrate. The chain is Lysine-specific demethylase 7A (KDM7A) from Homo sapiens (Human).